Consider the following 598-residue polypeptide: MTALANIRNFSIIAHIDHGKSTLADRFIQMCGALQDREMQAQVLDSMDIERERGITIKAQSVTLYYDHPNGERYQLNFIDTPGHVDFSYEVSRSLAACEGALLVVDAAQGVEAQSVANCYTAVDQGLEVMAVLNKIDLPQVEPERVIQEIEDIIGIDAVDAPRVSAKSGLGVDKLLEALVEFIPAPTGDRDAPLQALIIDSWFDNYLGVVSLVRVRQGTIKKGDKLYIKSTKDAHLVGSIGVFTPKPLDTGILEAGEVGFIIAGIKDIAGAPVGDTITHASTPDVDCIPGFKQITPQVYAGMFPVESTDFEKFREALQKLQINDASLFFEPDTSDALGFGFRCGFLGMLHMEIIQERLEREYDLDLITTAPSVIYEIVKKDGSIIYVDNPSRLPEPNNIEEFREPIARCQILVPQDYLGNVMTLCIERRGVQVDMRFMGRQVQLIFDIPMGEVVMDFFDRLKSVSRGFASLDYNFERYQVDKLVKVDVLINGDKVDALAMIVHETQSRYRGNALVSKMKELIPRQMFDVAIQAAIGSQIIGRSTVKAMRKDVLAKCYGGDVSRKKKLLSKQKAGKKRMKQVGNVEIPQEAFLAVLQVD.

The tr-type G domain occupies Ala-5–Thr-187. GTP-binding positions include Asp-17–Thr-22 and Asn-134–Asp-137.

Belongs to the TRAFAC class translation factor GTPase superfamily. Classic translation factor GTPase family. LepA subfamily.

Its subcellular location is the cell inner membrane. It carries out the reaction GTP + H2O = GDP + phosphate + H(+). Functionally, required for accurate and efficient protein synthesis under certain stress conditions. May act as a fidelity factor of the translation reaction, by catalyzing a one-codon backward translocation of tRNAs on improperly translocated ribosomes. Back-translocation proceeds from a post-translocation (POST) complex to a pre-translocation (PRE) complex, thus giving elongation factor G a second chance to translocate the tRNAs correctly. Binds to ribosomes in a GTP-dependent manner. The protein is Elongation factor 4 of Psychrobacter arcticus (strain DSM 17307 / VKM B-2377 / 273-4).